Here is a 223-residue protein sequence, read N- to C-terminus: Phosphoribosylformylglycinamidine synthase subunit PurQ (223 aa).

Residues 4-223 (FAVVVFPGTN…FRSMVEWARK (220 aa)) form the Glutamine amidotransferase type-1 domain. The Nucleophile role is filled by C85. Catalysis depends on residues H196 and E198.

In terms of assembly, part of the FGAM synthase complex composed of 1 PurL, 1 PurQ and 2 PurS subunits.

The protein resides in the cytoplasm. It carries out the reaction N(2)-formyl-N(1)-(5-phospho-beta-D-ribosyl)glycinamide + L-glutamine + ATP + H2O = 2-formamido-N(1)-(5-O-phospho-beta-D-ribosyl)acetamidine + L-glutamate + ADP + phosphate + H(+). It catalyses the reaction L-glutamine + H2O = L-glutamate + NH4(+). It participates in purine metabolism; IMP biosynthesis via de novo pathway; 5-amino-1-(5-phospho-D-ribosyl)imidazole from N(2)-formyl-N(1)-(5-phospho-D-ribosyl)glycinamide: step 1/2. Its function is as follows. Part of the phosphoribosylformylglycinamidine synthase complex involved in the purines biosynthetic pathway. Catalyzes the ATP-dependent conversion of formylglycinamide ribonucleotide (FGAR) and glutamine to yield formylglycinamidine ribonucleotide (FGAM) and glutamate. The FGAM synthase complex is composed of three subunits. PurQ produces an ammonia molecule by converting glutamine to glutamate. PurL transfers the ammonia molecule to FGAR to form FGAM in an ATP-dependent manner. PurS interacts with PurQ and PurL and is thought to assist in the transfer of the ammonia molecule from PurQ to PurL. This chain is Phosphoribosylformylglycinamidine synthase subunit PurQ, found in Thermococcus kodakarensis (strain ATCC BAA-918 / JCM 12380 / KOD1) (Pyrococcus kodakaraensis (strain KOD1)).